The following is a 488-amino-acid chain: Catalase (488 aa).

Positions 1-24 (MTDRRNLTTNQGVPIGDNQNSMTA) are disordered. A compositionally biased stretch (polar residues) spans 7 to 23 (LTTNQGVPIGDNQNSMT). Residues H55 and N128 contribute to the active site. Residue Y338 coordinates heme.

This sequence belongs to the catalase family. Requires heme as cofactor.

The protein localises to the cytoplasm. It catalyses the reaction 2 H2O2 = O2 + 2 H2O. Its function is as follows. Decomposes hydrogen peroxide into water and oxygen; serves to protect cells from the toxic effects of hydrogen peroxide. The sequence is that of Catalase (kat) from Listeria seeligeri.